Reading from the N-terminus, the 360-residue chain is Phenylalanine--tRNA ligase alpha subunit (360 aa).

Glutamate 260 lines the Mg(2+) pocket.

The protein belongs to the class-II aminoacyl-tRNA synthetase family. Phe-tRNA synthetase alpha subunit type 1 subfamily. As to quaternary structure, tetramer of two alpha and two beta subunits. Mg(2+) serves as cofactor.

Its subcellular location is the cytoplasm. It carries out the reaction tRNA(Phe) + L-phenylalanine + ATP = L-phenylalanyl-tRNA(Phe) + AMP + diphosphate + H(+). The polypeptide is Phenylalanine--tRNA ligase alpha subunit (Rhodopseudomonas palustris (strain ATCC BAA-98 / CGA009)).